Reading from the N-terminus, the 439-residue chain is Protein PHYTOCHROME KINASE SUBSTRATE 1 (439 aa).

The segment covering 1–14 (MVTLTPSSASTPKT) has biased composition (polar residues). 3 disordered regions span residues 1–22 (MVTL…MKNN), 54–80 (KTLN…APED), and 100–139 (QGSS…SSWN). Basic and acidic residues predominate over residues 63–79 (KQEEFGDEKKMVKKAPE). Polar residues-rich tracts occupy residues 100–109 (QGSSVLSLTN) and 118–139 (DSKQ…SSWN). Phosphoserine is present on residues serine 238 and serine 244. 2 disordered regions span residues 259–311 (LPLP…PTCY) and 355–439 (TAKS…LYSQ). Residues 412 to 421 (TKPKSFETRR) are compositionally biased toward basic and acidic residues. The span at 424–439 (SNSSISHTQSSLLYSQ) shows a compositional bias: low complexity.

Belongs to the PKS family. In terms of assembly, interacts with PKS2, RPT3, PHOT1, PHOT2 and the C-termini of both phytochromes A (phyA) and B (phyB). Binds both spectral forms of phytochrome, Pr and Pfr. Phosphorylated on Ser and to a lower extent on Thr by phytochromes. Phosphorylation is stimulated twofold by red light. In terms of tissue distribution, expressed in young seedlings in both darkness and light. Moderate in leaves and very low in roots and flowers. Expressed in the elongation zone of the root and hypocotyl.

The protein localises to the cell membrane. May be responsible for light-regulated cytoplasmic sequestration of phytochromes or may be a negative regulator of phytochrome B signaling. Component of the network that modulates the very low-fluence response (VLFR) branch of phyA signaling. Acts positively in PHOT1 signaling. Regulates phytochrome-mediated photomorphogenesis and hypocotyl phototropism. Involved in the control of leaf flattening and leaf positioning. Promotes negative root phototropism and negatively regulates root gravitropism. May act by controlling auxin homeostasis. The sequence is that of Protein PHYTOCHROME KINASE SUBSTRATE 1 (PKS1) from Arabidopsis thaliana (Mouse-ear cress).